A 255-amino-acid polypeptide reads, in one-letter code: Glutamate racemase (255 aa).

Residues 7 to 8 (DS) and 39 to 40 (YG) contribute to the substrate site. Cysteine 70 serves as the catalytic Proton donor/acceptor. 71–72 (NT) provides a ligand contact to substrate. The active-site Proton donor/acceptor is the cysteine 181. Residue 182-183 (TH) participates in substrate binding.

This sequence belongs to the aspartate/glutamate racemases family.

The catalysed reaction is L-glutamate = D-glutamate. Its pathway is cell wall biogenesis; peptidoglycan biosynthesis. Its function is as follows. Provides the (R)-glutamate required for cell wall biosynthesis. The sequence is that of Glutamate racemase from Helicobacter pylori (strain HPAG1).